The sequence spans 95 residues: Aspartyl/glutamyl-tRNA(Asn/Gln) amidotransferase subunit C (95 aa).

Belongs to the GatC family. In terms of assembly, heterotrimer of A, B and C subunits.

The enzyme catalyses L-glutamyl-tRNA(Gln) + L-glutamine + ATP + H2O = L-glutaminyl-tRNA(Gln) + L-glutamate + ADP + phosphate + H(+). The catalysed reaction is L-aspartyl-tRNA(Asn) + L-glutamine + ATP + H2O = L-asparaginyl-tRNA(Asn) + L-glutamate + ADP + phosphate + 2 H(+). Its function is as follows. Allows the formation of correctly charged Asn-tRNA(Asn) or Gln-tRNA(Gln) through the transamidation of misacylated Asp-tRNA(Asn) or Glu-tRNA(Gln) in organisms which lack either or both of asparaginyl-tRNA or glutaminyl-tRNA synthetases. The reaction takes place in the presence of glutamine and ATP through an activated phospho-Asp-tRNA(Asn) or phospho-Glu-tRNA(Gln). The protein is Aspartyl/glutamyl-tRNA(Asn/Gln) amidotransferase subunit C of Lysinibacillus sphaericus (strain C3-41).